The primary structure comprises 563 residues: GTPase Obg (563 aa).

Positions 2–168 (SDFVDRVTVH…RDVILELKSI (167 aa)) constitute an Obg domain. Positions 169–349 (ADVALVGFPS…LNWALADLVT (181 aa)) constitute an OBG-type G domain. GTP contacts are provided by residues 175-182 (GFPSAGKS), 200-204 (FTTLV), 221-224 (DVPG), 301-304 (NKVD), and 330-332 (STA). Serine 182 and threonine 202 together coordinate Mg(2+). In terms of domain architecture, OCT spans 383–469 (DEGGNALDFT…DRAVEFDWDP (87 aa)). Residues 525–563 (MMAERKAGHWADPSVDDDRHDETSLFGRGETADDEDVEQ) are disordered.

This sequence belongs to the TRAFAC class OBG-HflX-like GTPase superfamily. OBG GTPase family. Monomer. Mg(2+) is required as a cofactor.

The protein localises to the cytoplasm. An essential GTPase which binds GTP, GDP and possibly (p)ppGpp with moderate affinity, with high nucleotide exchange rates and a fairly low GTP hydrolysis rate. Plays a role in control of the cell cycle, stress response, ribosome biogenesis and in those bacteria that undergo differentiation, in morphogenesis control. The chain is GTPase Obg from Bifidobacterium adolescentis (strain ATCC 15703 / DSM 20083 / NCTC 11814 / E194a).